Consider the following 1876-residue polypeptide: Phenolphthiocerol/phthiocerol polyketide synthase subunit A (1876 aa).

Residues Ala9 to Glu83 form the Carrier 1 domain. Ser43 carries the O-(pantetheine 4'-phosphoryl)serine modification. The region spanning Asp101–Gln526 is the Ketosynthase family 3 (KS3) domain. Residues Cys273, His408, and His448 each act as for beta-ketoacyl synthase activity in the active site. The interval Ser626–Pro950 is acyltransferase. Ser720 serves as the catalytic For malonyltransferase activity. Residues His997–Ser1112 are N-terminal hotdog fold. One can recognise a PKS/mFAS DH domain in the interval His997–Val1267. The active-site Proton acceptor; for dehydratase activity is the His1027. A disordered region spans residues Thr1102–Ala1130. Over residues Ser1106 to Ser1115 the composition is skewed to low complexity. The C-terminal hotdog fold stretch occupies residues Ala1130–Val1267. Residue Asp1186 is the Proton donor; for dehydratase activity of the active site. Ala1491 to Leu1551 contributes to the NADP(+) binding site. A beta-ketoacyl reductase region spans residues Ala1491–Val1728. The Carrier 2 domain occupies Glu1759–Val1836. Position 1796 is an O-(pantetheine 4'-phosphoryl)serine (Ser1796).

NADP(+) is required as a cofactor. Pantetheine 4'-phosphate serves as cofactor.

It carries out the reaction icosanoyl-[(phenol)carboxyphthiodiolenone synthase] + 2 (S)-methylmalonyl-CoA + 3 malonyl-CoA + 5 NADPH + 10 H(+) = C32-carboxyphthiodiolenone-[(phenol)carboxyphthiodiolenone synthase] + 5 CO2 + 5 NADP(+) + 5 CoA + 2 H2O. The enzyme catalyses docosanoyl-[(phenol)carboxyphthiodiolenone synthase] + 2 (S)-methylmalonyl-CoA + 3 malonyl-CoA + 5 NADPH + 10 H(+) = C34-carboxyphthiodiolenone-[(phenol)carboxyphthiodiolenone synthase] + 5 CO2 + 5 NADP(+) + 5 CoA + 2 H2O. It catalyses the reaction 17-(4-hydroxyphenyl)heptadecanoyl-[(phenol)carboxyphthiodiolenone synthase] + 2 (S)-methylmalonyl-CoA + 3 malonyl-CoA + 5 NADPH + 10 H(+) = C35-(phenol)carboxyphthiodiolenone-[(phenol)carboxyphthiodiolenone synthase] + 5 CO2 + 5 NADP(+) + 5 CoA + 2 H2O. The catalysed reaction is 19-(4-hydroxyphenyl)nonadecanoyl-[(phenol)carboxyphthiodiolenone synthase] + 2 (S)-methylmalonyl-CoA + 3 malonyl-CoA + 5 NADPH + 10 H(+) = C37-(phenol)carboxyphthiodiolenone-[(phenol)carboxyphthiodiolenone synthase] + 5 CO2 + 5 NADP(+) + 5 CoA + 2 H2O. Its pathway is lipid metabolism; fatty acid biosynthesis. Its function is as follows. Part of the PpsABCDE complex involved in the biosynthesis of the lipid core common to phthiocerols and phenolphthiocerols by successive additions of malonyl-CoA or methylmalonyl-CoA extender units. PpsA can accept as substrate the activated forms of either icosanoyl (C20), docosanoyl (C22) or lignoceroyl (C24) groups from FadD26, or a (4-hydroxyphenyl)-C17 or (4-hydroxyphenyl)-C19 fatty acyl from FadD29. PpsA initiates the biosynthesis and extends its substrate using a malonyl-CoA extender unit. The PpsB and PpsC proteins add the second and third malonyl-CoA extender units. PpsD adds an (R)-methylmalonyl unit and PpsE adds a second (R)-methylmalonyl unit. The incorporation of the methylmalonyl units results in formation of two branched methyl groups in the elongated product. The chain is Phenolphthiocerol/phthiocerol polyketide synthase subunit A (ppsA) from Mycobacterium tuberculosis (strain CDC 1551 / Oshkosh).